The sequence spans 224 residues: Elongation factor 1-beta (224 aa).

The protein belongs to the EF-1-beta/EF-1-delta family. EF-1 is composed of 4 subunits: alpha, beta (1B-alpha=beta'), delta (1B-beta), and gamma (1B-gamma).

In terms of biological role, EF-1-beta and EF-1-beta' stimulate the exchange of GDP bound to EF-1-alpha to GTP. This Oryza sativa subsp. japonica (Rice) protein is Elongation factor 1-beta.